The sequence spans 208 residues: MRGKFIVLEGLEGAGKTTAHQVILAQLEKAGKNVVQTREPGGTPLAEKLRHLIKHETEEAVSDKAELLMLYAARIQLVENVIKPALAEGKWVLGDRHDMSSQAYQGGGRQIDRHLLETLKETVLGNFEPDLTIYLDIDPAVGLARARGRGELDRIEQQSLDFFYRTRQRYLELTQNNEKAVIINAEQSIEQVAADIQQAVENFLKIAK.

An ATP-binding site is contributed by 10 to 17; it reads GLEGAGKT.

This sequence belongs to the thymidylate kinase family.

It carries out the reaction dTMP + ATP = dTDP + ADP. Phosphorylation of dTMP to form dTDP in both de novo and salvage pathways of dTTP synthesis. In Actinobacillus pleuropneumoniae serotype 5b (strain L20), this protein is Thymidylate kinase.